We begin with the raw amino-acid sequence, 256 residues long: GDSL esterase/lipase At1g18120 (256 aa).

Positions 1–49 (MYRVYKNNKFILISIPRITNKLWQKNCNLVILLGVLLVLTLFHDPIIVA) are cleaved as a signal peptide. Serine 67 serves as the catalytic Nucleophile. A glycan (N-linked (GlcNAc...) asparagine) is linked at asparagine 181.

The protein belongs to the 'GDSL' lipolytic enzyme family.

It localises to the secreted. This chain is GDSL esterase/lipase At1g18120, found in Arabidopsis thaliana (Mouse-ear cress).